We begin with the raw amino-acid sequence, 103 residues long: Large ribosomal subunit protein uL24 (103 aa).

The protein belongs to the universal ribosomal protein uL24 family. Part of the 50S ribosomal subunit.

Its function is as follows. One of two assembly initiator proteins, it binds directly to the 5'-end of the 23S rRNA, where it nucleates assembly of the 50S subunit. Functionally, one of the proteins that surrounds the polypeptide exit tunnel on the outside of the subunit. The chain is Large ribosomal subunit protein uL24 from Glaesserella parasuis serovar 5 (strain SH0165) (Haemophilus parasuis).